The following is a 283-amino-acid chain: Coiled-coil domain-containing protein 107 (283 aa).

Residues 1 to 24 (MAGAVSLLGVVGLLLVSALSGVLG) form the signal peptide. The tract at residues 30–62 (DLRAHPGNAAHPGSGATEPRRRPPLKDQRERTR) is disordered. A compositionally biased stretch (basic and acidic residues) spans 47–62 (EPRRRPPLKDQRERTR). A helical transmembrane segment spans residues 65–85 (SLPLGALYTAAVAAFVLYKCL). Positions 104-134 (LQSEQQLAQLTQQLAQTEQHLNNLMAQLDPL) form a coiled coil. Disordered stretches follow at residues 164-207 (KPDK…SRPL) and 258-283 (AKGP…SLFS). Positions 176–187 (EGSGGESAGGGD) are enriched in gly residues.

It localises to the membrane. This Homo sapiens (Human) protein is Coiled-coil domain-containing protein 107 (CCDC107).